The sequence spans 96 residues: Prokineticin Bo8 (96 aa).

An N-terminal signal peptide occupies residues 1–19 (MKCFAQIVVLLLVIAFSHG). Cystine bridges form between Cys26–Cys38, Cys32–Cys50, Cys37–Cys78, Cys60–Cys86, and Cys80–Cys95.

Expressed by the skin glands.

The protein resides in the secreted. Functionally, potent agonist for both PKR1/PROKR1 and PKR2/PROKR2, and inducer of a potent and long-lasting hyperalgesia. Also potentiates capsaicin-induced TRPV1 current, when tested on DRG neurons. At subnanomolar concentrations, this protein both induces potent chemotaxis of macrophages and stimulates LPS-induced production of the pro-inflammatory cytokines IL-1 and IL-12. In vivo, potently stimulates the contraction of the guinea-pig gastrointestinal (GI) smooth muscle (nanomolar concentration). This Bombina orientalis (Oriental fire-bellied toad) protein is Prokineticin Bo8.